Here is a 187-residue protein sequence, read N- to C-terminus: PBAN-type neuropeptides (187 aa).

The N-terminal stretch at 1–22 (MSRFYFFFNLICLYLAIKSALS) is a signal peptide. The propeptide occupies 23 to 64 (AELDTNDQKYADLRTTGRGESPDSTGPDSDTLRRDDGAEGLN). A compositionally biased stretch (basic and acidic residues) spans 34-43 (DLRTTGRGES). The tract at residues 34 to 58 (DLRTTGRGESPDSTGPDSDTLRRDD) is disordered. A Leucine amide modification is found at leucine 76. Positions 80–127 (TIAADLHDDLVEEFDAEPLGYAGEPPQKLATELVQGAPYMVLLVTAKP) are excised as a propeptide. The interval 132-163 (PIFYHTTSPRLGRRDSVGENHQRPPFAPRLGR) is disordered. Leucine 142 is subject to Leucine amide. Positions 143 to 153 (GRRDSVGENHQ) are enriched in basic and acidic residues. Leucine 161 and leucine 171 each carry leucine amide. The propeptide occupies 174–187 (SYNGGYPLPFQFAY).

Belongs to the pyrokinin family.

It is found in the secreted. Its function is as follows. A hormone that controls sex pheromone production in females and pheromone responsiveness in male. Also mediates visceral muscle contractile activity (myotropic activity). This chain is PBAN-type neuropeptides, found in Anopheles gambiae (African malaria mosquito).